The primary structure comprises 874 residues: Alanine--tRNA ligase (874 aa).

Positions 565, 569, 666, and 670 each coordinate Zn(2+).

The protein belongs to the class-II aminoacyl-tRNA synthetase family. Zn(2+) is required as a cofactor.

The protein localises to the cytoplasm. It catalyses the reaction tRNA(Ala) + L-alanine + ATP = L-alanyl-tRNA(Ala) + AMP + diphosphate. Catalyzes the attachment of alanine to tRNA(Ala) in a two-step reaction: alanine is first activated by ATP to form Ala-AMP and then transferred to the acceptor end of tRNA(Ala). Also edits incorrectly charged Ser-tRNA(Ala) and Gly-tRNA(Ala) via its editing domain. The protein is Alanine--tRNA ligase of Polynucleobacter asymbioticus (strain DSM 18221 / CIP 109841 / QLW-P1DMWA-1) (Polynucleobacter necessarius subsp. asymbioticus).